The chain runs to 298 residues: ER-bound oxygenase mpaB (298 aa).

The Lumenal portion of the chain corresponds to 1-24 (MDKGTSFFTTPSFSATTRAIFNTM). A helical transmembrane segment spans residues 25–45 (PQWFSFAVGLLIAYPLLINSL). Over 46–298 (RYRRLKQLQK…RLRKAMLYVE (253 aa)) the chain is Cytoplasmic.

This sequence belongs to the mpaB oxygenase family.

It localises to the endoplasmic reticulum membrane. It carries out the reaction 4-farnesyl-3,5-dihydroxy-6-methylphthalide + AH2 + 2 O2 = (4E,8E)-10-(4,6-dihydroxy-7-methyl-3-oxo-1,3-dihydro-2-benzofuran-5-yl)-4,8-dimethyldeca-4,8-dienoate + acetone + A + H2O + H(+). It functions in the pathway secondary metabolite biosynthesis; terpenoid biosynthesis. Its function is as follows. ER-bound oxygenase; part of the gene cluster that mediates the biosynthesis of mycophenolic acid (MPA), the first isolated antibiotic natural product in the world obtained from a culture of Penicillium brevicompactum in 1893. MpaB catalyzes the oxidative cleavage the C19-C20 double bond in farnesyl-DHMP (FDHMP) to yield FDHMP-3C via a mycophenolic aldehyde intermediate. The first step of the pathway is the synthesis of 5-methylorsellinic acid (5MOA) by the cytosolic polyketide synthase mpaC. 5MOA is then converted to the phthalide compound 5,7-dihydroxy-4,6-dimethylphthalide (DHMP) by the endoplasmic reticulum-bound cytochrome P450 monooxygenase mpaDE. MpaDE first catalyzes hydroxylation of 5-MOA to 4,6-dihydroxy-2-(hydroxymethyl)-3-methylbenzoic acid (DHMB). MpaDE then acts as a lactone synthase that catalyzes the ring closure to convert DHMB into DHMP. The next step is the prenylation of DHMP by the Golgi apparatus-associated prenyltransferase mpaA to yield farnesyl-DHMP (FDHMP). The ER-bound oxygenase mpaB then mediates the oxidative cleavage the C19-C20 double bond in FDHMP to yield FDHMP-3C via a mycophenolic aldehyde intermediate. The O-methyltransferase mpaG catalyzes the methylation of FDHMP-3C to yield MFDHMP-3C. After the cytosolic methylation of FDHMP-3C, MFDHMP-3C enters into peroxisomes probably via free diffusion due to its low molecular weight. Upon a peroxisomal CoA ligation reaction, catalyzed by a beta-oxidation component enzyme acyl-CoA ligase ACL891, MFDHMP-3C-CoA would then be restricted to peroxisomes for the following beta-oxidation pathway steps. The peroxisomal beta-oxidation machinery than converts MFDHMP-3C-CoA into MPA_CoA, via a beta-oxidation chain-shortening process. Finally mpaH acts as a peroxisomal acyl-CoA hydrolase with high substrate specificity toward MPA-CoA to release the final product MPA. The sequence is that of ER-bound oxygenase mpaB from Penicillium roqueforti (strain FM164).